Here is a 237-residue protein sequence, read N- to C-terminus: Lectin alpha chain (237 aa).

Residues Glu8 and Asp10 each coordinate Mn(2+). 4 residues coordinate Ca(2+): Asp10, Tyr12, Asn14, and Asp19. Residues Tyr12 and Asn14 each contribute to the a carbohydrate site. Residues Asp19 and His24 each contribute to the Mn(2+) site. Leu99 to Tyr100 is a binding site for a carbohydrate. Asp208 lines the Ca(2+) pocket. Arg228 is a binding site for a carbohydrate.

Belongs to the leguminous lectin family. In terms of assembly, homodimer and homotetramer. Oligomerization is pH-dependent with homotetramers forming at pH 4 and above.

Functionally, D-mannose/D-glucose-binding lectin. Has anti-inflammatory activity in animal models when applied intravenously. Has antinociceptive activity in mice when applied intravenously. The sequence is that of Lectin alpha chain from Canavalia boliviana.